Here is a 104-residue protein sequence, read N- to C-terminus: MAAKIRRDDEIIVLTGKDKGKRGKVKNVLSAGKVIVEGINLVKKHQKPVPALNQPGGIVEKEAAIQVSNIALFNAATGKADRVGFRFEDGKKVRFFKSNSETIK.

This sequence belongs to the universal ribosomal protein uL24 family. Part of the 50S ribosomal subunit.

One of two assembly initiator proteins, it binds directly to the 5'-end of the 23S rRNA, where it nucleates assembly of the 50S subunit. Functionally, one of the proteins that surrounds the polypeptide exit tunnel on the outside of the subunit. The sequence is that of Large ribosomal subunit protein uL24 from Serratia proteamaculans (strain 568).